A 411-amino-acid polypeptide reads, in one-letter code: Bestrophin homolog 26 (411 aa).

4 helical membrane passes run F30–I50, S73–V93, I235–V255, and T272–M292.

Belongs to the anion channel-forming bestrophin (TC 1.A.46) family. Calcium-sensitive chloride channel subfamily. Forms oligomers.

The protein resides in the cell membrane. Functionally, forms chloride channels. In Caenorhabditis elegans, this protein is Bestrophin homolog 26 (best-26).